A 206-amino-acid polypeptide reads, in one-letter code: FMN-dependent NADH:quinone oxidoreductase (206 aa).

Residues Ser-10 and 15–17 (SVS) each bind FMN.

Belongs to the azoreductase type 1 family. Homodimer. FMN is required as a cofactor.

It catalyses the reaction 2 a quinone + NADH + H(+) = 2 a 1,4-benzosemiquinone + NAD(+). It carries out the reaction N,N-dimethyl-1,4-phenylenediamine + anthranilate + 2 NAD(+) = 2-(4-dimethylaminophenyl)diazenylbenzoate + 2 NADH + 2 H(+). Quinone reductase that provides resistance to thiol-specific stress caused by electrophilic quinones. Its function is as follows. Also exhibits azoreductase activity. Catalyzes the reductive cleavage of the azo bond in aromatic azo compounds to the corresponding amines. The sequence is that of FMN-dependent NADH:quinone oxidoreductase from Acidobacterium capsulatum (strain ATCC 51196 / DSM 11244 / BCRC 80197 / JCM 7670 / NBRC 15755 / NCIMB 13165 / 161).